The chain runs to 613 residues: Carotenoid dioxygenase (613 aa).

The segment at 1–25 (MSPHEVIGTVPKNSTTFRTQADEHD) is disordered. Histidine 261, histidine 313, histidine 383, and histidine 595 together coordinate Fe(2+).

Belongs to the carotenoid oxygenase family. Fe(2+) serves as cofactor.

The protein localises to the cytoplasm. It is found in the cytosol. It catalyses the reaction torulene + O2 = 4'-apo-beta-carotenal + 3-methyl-2-butenal. Its pathway is carotenoid biosynthesis. In terms of biological role, torulene dioxygenase; part of pathway that mediates the biosynthesis of neurosporaxanthin, a carboxylic apocarotenoid acting as an essential protective pigments and leading to orange pigmentation. Cao-2 mediates the cleavage of torulene into beta-apo-4'-carotenal, the aldehyde corresponding to the acidic neurosporaxanthin. Is not able to use gamma-carotene (that it is not desaturated at the C4'-C5' bond) as substrate, which suggests a high specificity of cao-2 in cleaving the C4'-C5' double bond. Neurosporaxanthin is synthesized from geranyl-geranyl pyrophosphate (GGPP) through several enzymatic activities. Phytoene synthase activity performed by the bifunctional enzyme al-2 first produces phytoene from geranyl-geranyl pyrophosphate (GGPP). The phytoene dehydrogenase al-1 then introduces 5 desaturations to lead to 3,4-didehydrolycopene via the intermediates phytofluene, zeta-carotene, neurosporene and lycopene. Al-2 cyclase activity then converts 3,4-didehydrolycopene into torulene. Al-2 can also convet lycopene into gamma-carotene which in turn is converted to beta-carotene by an additional al-2 cyclization reaction. Torulene is the substrate of the dioxidase cao-2 that breaks the molecule, removing five carbon atoms to yield beta-apo-4'-carotenal, whereas the aldehyde dehydrogenase ylo-1 mediates the last step by converting beta-apo-4'-carotenal into neurosporaxanthin. The sequence is that of Carotenoid dioxygenase from Neurospora crassa (strain ATCC 24698 / 74-OR23-1A / CBS 708.71 / DSM 1257 / FGSC 987).